Consider the following 393-residue polypeptide: Cysteine desulfurase (393 aa).

Pyridoxal 5'-phosphate-binding positions include 76–77 (GT), Asn-155, Gln-183, and 203–205 (SAH). Position 206 is an N6-(pyridoxal phosphate)lysine (Lys-206). Thr-241 lines the pyridoxal 5'-phosphate pocket. Cys-328 (cysteine persulfide intermediate) is an active-site residue. A [2Fe-2S] cluster-binding site is contributed by Cys-328.

This sequence belongs to the class-V pyridoxal-phosphate-dependent aminotransferase family. NifS/IscS subfamily. In terms of assembly, homodimer. It depends on pyridoxal 5'-phosphate as a cofactor.

The enzyme catalyses (sulfur carrier)-H + L-cysteine = (sulfur carrier)-SH + L-alanine. Catalyzes the removal of elemental sulfur atoms from cysteine to produce alanine. Seems to participate in the biosynthesis of the nitrogenase metalloclusters by providing the inorganic sulfur required for the Fe-S core formation. The protein is Cysteine desulfurase of Bradyrhizobium diazoefficiens (strain JCM 10833 / BCRC 13528 / IAM 13628 / NBRC 14792 / USDA 110).